The following is a 60-amino-acid chain: Large ribosomal subunit protein bL33 (60 aa).

It belongs to the bacterial ribosomal protein bL33 family.

The polypeptide is Large ribosomal subunit protein bL33 (Flavobacterium psychrophilum (strain ATCC 49511 / DSM 21280 / CIP 103535 / JIP02/86)).